The following is a 282-amino-acid chain: MSSYANHQALAGLTLGKSTDYRDTYDASLLQGVPRSLNRDPLGLKADNLPFHGTDIWTLYELSWLNAKGLPQVAVGHVELDYTSVNLIESKSFKLYLNSFNQTRFNNWDEVRQTLERDLSTCAQGKVSVALYRLDELEGQPIGHFNGTCIDDQDITIDNYEFTTDYLENATSGEKVVEETLVSHLLKSNCLITHQPDWGSIQIQYRGRQIDREKLLRYLVSFRHHNEFHEQCVERIFNDLLRFCQPEKLSVYARYTRRGGLDINPWRSNSDFVPSTTRLVRQ.

88-90 (IES) is a substrate binding site. An NADPH-binding site is contributed by 90 to 91 (SK). Cys190 serves as the catalytic Thioimide intermediate. The Proton donor role is filled by Asp197. Position 229-230 (229-230 (HE)) interacts with substrate. 258-259 (RG) provides a ligand contact to NADPH.

This sequence belongs to the GTP cyclohydrolase I family. QueF type 2 subfamily. In terms of assembly, homodimer.

It localises to the cytoplasm. It catalyses the reaction 7-aminomethyl-7-carbaguanine + 2 NADP(+) = 7-cyano-7-deazaguanine + 2 NADPH + 3 H(+). It participates in tRNA modification; tRNA-queuosine biosynthesis. Catalyzes the NADPH-dependent reduction of 7-cyano-7-deazaguanine (preQ0) to 7-aminomethyl-7-deazaguanine (preQ1). This Escherichia coli O139:H28 (strain E24377A / ETEC) protein is NADPH-dependent 7-cyano-7-deazaguanine reductase.